The primary structure comprises 175 residues: ATP synthase subunit delta (175 aa).

Belongs to the ATPase delta chain family. F-type ATPases have 2 components, F(1) - the catalytic core - and F(0) - the membrane proton channel. F(1) has five subunits: alpha(3), beta(3), gamma(1), delta(1), epsilon(1). F(0) has three main subunits: a(1), b(2) and c(10-14). The alpha and beta chains form an alternating ring which encloses part of the gamma chain. F(1) is attached to F(0) by a central stalk formed by the gamma and epsilon chains, while a peripheral stalk is formed by the delta and b chains.

The protein resides in the cell membrane. Functionally, f(1)F(0) ATP synthase produces ATP from ADP in the presence of a proton or sodium gradient. F-type ATPases consist of two structural domains, F(1) containing the extramembraneous catalytic core and F(0) containing the membrane proton channel, linked together by a central stalk and a peripheral stalk. During catalysis, ATP synthesis in the catalytic domain of F(1) is coupled via a rotary mechanism of the central stalk subunits to proton translocation. This protein is part of the stalk that links CF(0) to CF(1). It either transmits conformational changes from CF(0) to CF(1) or is implicated in proton conduction. The protein is ATP synthase subunit delta of Brevibacillus brevis (strain 47 / JCM 6285 / NBRC 100599).